The chain runs to 225 residues: MENVLKNDWEPLLAPEFEKEYYLTLSSFLTEEYSTHVVYPKVEDIFNALQYTSYENTKVVILGQDPYHGPNQAHGLSFSVQPGVKTPPSLLNMYKELRDEYGYEIPNNGYLVKWAEQGVLLLNTVLTVRQGEANSHKGKGWEHFTDRVIELLNEREKPVIFILWGRHAQAKKKLITNPNHHIIESVHPSPLSARRGFFGSKPYSKINTILANMGEREIDWEIPNL.

Aspartate 65 acts as the Proton acceptor in catalysis.

Belongs to the uracil-DNA glycosylase (UDG) superfamily. UNG family.

Its subcellular location is the cytoplasm. It catalyses the reaction Hydrolyzes single-stranded DNA or mismatched double-stranded DNA and polynucleotides, releasing free uracil.. Its function is as follows. Excises uracil residues from the DNA which can arise as a result of misincorporation of dUMP residues by DNA polymerase or due to deamination of cytosine. The chain is Uracil-DNA glycosylase from Bacillus cereus (strain B4264).